The sequence spans 241 residues: Uridylate kinase (241 aa).

13–16 (KVSG) serves as a coordination point for ATP. Residue glycine 55 coordinates UMP. Glycine 56 and arginine 60 together coordinate ATP. Residues aspartate 75 and 136–143 (TGNPFFTT) each bind UMP. The ATP site is built by threonine 163, glutamine 164, tyrosine 169, and aspartate 172.

The protein belongs to the UMP kinase family. In terms of assembly, homohexamer.

It is found in the cytoplasm. The catalysed reaction is UMP + ATP = UDP + ADP. The protein operates within pyrimidine metabolism; CTP biosynthesis via de novo pathway; UDP from UMP (UMPK route): step 1/1. Inhibited by UTP. In terms of biological role, catalyzes the reversible phosphorylation of UMP to UDP. This Parvibaculum lavamentivorans (strain DS-1 / DSM 13023 / NCIMB 13966) protein is Uridylate kinase.